We begin with the raw amino-acid sequence, 504 residues long: L-amino-acid oxidase (504 aa).

Residues 1–18 (MNVFFMFSLLFLATLGSC) form the signal peptide. A disulfide bond links Cys28 and Cys191. Residues 61–62 (MS), 81–82 (EA), Arg89, and 105–108 (GPMR) each bind FAD. Residue Arg108 participates in substrate binding. An N-linked (GlcNAc...) asparagine glycan is attached at Asn190. Position 241 (His241) interacts with substrate. Residue Val279 participates in FAD binding. Cys349 and Cys430 are joined by a disulfide. N-linked (GlcNAc...) asparagine glycosylation is present at Asn379. Position 390 (Tyr390) interacts with substrate. FAD is bound by residues Glu475 and 482 to 487 (GWIDST). 482–483 (GW) contacts substrate.

The protein belongs to the flavin monoamine oxidase family. FIG1 subfamily. As to quaternary structure, homodimer; non-covalently linked. Requires FAD as cofactor. Expressed by the venom gland.

The protein resides in the secreted. The catalysed reaction is an L-alpha-amino acid + O2 + H2O = a 2-oxocarboxylate + H2O2 + NH4(+). It catalyses the reaction L-leucine + O2 + H2O = 4-methyl-2-oxopentanoate + H2O2 + NH4(+). It carries out the reaction L-phenylalanine + O2 + H2O = 3-phenylpyruvate + H2O2 + NH4(+). The enzyme catalyses L-tryptophan + O2 + H2O = indole-3-pyruvate + H2O2 + NH4(+). The catalysed reaction is L-methionine + O2 + H2O = 4-methylsulfanyl-2-oxobutanoate + H2O2 + NH4(+). It catalyses the reaction L-tyrosine + O2 + H2O = 3-(4-hydroxyphenyl)pyruvate + H2O2 + NH4(+). Catalyzes an oxidative deamination of predominantly hydrophobic and aromatic L-amino acids, thus producing hydrogen peroxide that may contribute to the diverse toxic effects of this enzyme. Is highly active on L-Tyr followed by L-Phe, L-Met, L-Leu, L-Trp, and weakly active on L-Ile, L-Arg, L-Val, L-Lys, and L-Ala. Inhibits ADP- and collagen-induced platelet aggregation. This inhibition is inhibited by catalase, indicating the importance of generated H(2)O(2) for the inhibitory effect. This effect on platelets among snake L-amino-acid oxidases is however controversial, since some of them induce aggregation, whereas the other inhibit agonist-induced aggregation. In vivo, this enzyme induces a rapid, substantial and reversible increase in the paw volume of mice (edema). In addition, myofibrosis, and inflammatory cell infiltration on the paw tissue are also observed. The sequence is that of L-amino-acid oxidase from Daboia russelii (Russel's viper).